A 621-amino-acid chain; its full sequence is 1-deoxy-D-xylulose-5-phosphate synthase (621 aa).

Thiamine diphosphate contacts are provided by residues His80 and 121–123 (GHS). Asp152 contacts Mg(2+). Thiamine diphosphate is bound by residues 153–154 (GA), Asn181, Tyr288, and Glu370. Asn181 contacts Mg(2+).

It belongs to the transketolase family. DXPS subfamily. Homodimer. It depends on Mg(2+) as a cofactor. The cofactor is thiamine diphosphate.

The enzyme catalyses D-glyceraldehyde 3-phosphate + pyruvate + H(+) = 1-deoxy-D-xylulose 5-phosphate + CO2. The protein operates within metabolic intermediate biosynthesis; 1-deoxy-D-xylulose 5-phosphate biosynthesis; 1-deoxy-D-xylulose 5-phosphate from D-glyceraldehyde 3-phosphate and pyruvate: step 1/1. In terms of biological role, catalyzes the acyloin condensation reaction between C atoms 2 and 3 of pyruvate and glyceraldehyde 3-phosphate to yield 1-deoxy-D-xylulose-5-phosphate (DXP). The polypeptide is 1-deoxy-D-xylulose-5-phosphate synthase (Vibrio campbellii (strain ATCC BAA-1116)).